Here is a 432-residue protein sequence, read N- to C-terminus: 5'-deoxyadenosine deaminase (432 aa).

Zn(2+) contacts are provided by His63 and His65. Residues Glu92 and His184 each contribute to the substrate site. A Zn(2+)-binding site is contributed by His211. Substrate contacts are provided by Glu214 and Asp299. Asp299 lines the Zn(2+) pocket.

The protein belongs to the metallo-dependent hydrolases superfamily. MTA/SAH deaminase family. As to quaternary structure, homotetramer. Requires Zn(2+) as cofactor.

The catalysed reaction is 5'-deoxyadenosine + H2O + H(+) = 5'-deoxyinosine + NH4(+). It carries out the reaction S-adenosyl-L-homocysteine + H2O + H(+) = S-inosyl-L-homocysteine + NH4(+). The enzyme catalyses S-methyl-5'-thioadenosine + H2O + H(+) = S-methyl-5'-thioinosine + NH4(+). It catalyses the reaction adenosine + H2O + H(+) = inosine + NH4(+). The protein operates within amino-acid biosynthesis; S-adenosyl-L-methionine biosynthesis. Functionally, catalyzes the deamination of three SAM-derived enzymatic products, namely 5'-deoxyadenosine, S-adenosyl-L-homocysteine, and 5'-methylthioadenosine, to produce the inosine analogs. Can also deaminate adenosine. The preferred substrate for this enzyme is 5'-deoxyadenosine, but all these substrates are efficiently deaminated. Likely functions in a S-adenosyl-L-methionine (SAM) recycling pathway from S-adenosyl-L-homocysteine (SAH) produced from SAM-dependent methylation reactions. May also be involved in the recycling of 5'-deoxyadenosine, whereupon the 5'-deoxyribose moiety of 5'-deoxyinosine is further metabolized to deoxyhexoses used for the biosynthesis of aromatic amino acids in methanogens. This is 5'-deoxyadenosine deaminase from Methanosarcina acetivorans (strain ATCC 35395 / DSM 2834 / JCM 12185 / C2A).